The sequence spans 52 residues: Insulin (52 aa).

Intrachain disulfides connect C7–C38, C19–C51, and C37–C42.

Belongs to the insulin family. In terms of assembly, heterodimer of a B chain and an A chain linked by two disulfide bonds.

It localises to the secreted. Functionally, insulin decreases blood glucose concentration. It increases cell permeability to monosaccharides, amino acids and fatty acids. It accelerates glycolysis, the pentose phosphate cycle, and glycogen synthesis in liver. The polypeptide is Insulin (ins) (Polypterus senegalus (Senegal bichir)).